A 245-amino-acid chain; its full sequence is tRNA1(Val) (adenine(37)-N6)-methyltransferase (245 aa).

The protein belongs to the methyltransferase superfamily. tRNA (adenine-N(6)-)-methyltransferase family.

It is found in the cytoplasm. The enzyme catalyses adenosine(37) in tRNA1(Val) + S-adenosyl-L-methionine = N(6)-methyladenosine(37) in tRNA1(Val) + S-adenosyl-L-homocysteine + H(+). Specifically methylates the adenine in position 37 of tRNA(1)(Val) (anticodon cmo5UAC). The chain is tRNA1(Val) (adenine(37)-N6)-methyltransferase from Salmonella typhi.